A 210-amino-acid polypeptide reads, in one-letter code: Troponin I, cardiac muscle (210 aa).

Positions 1 to 43 are disordered; that stretch reads MADGSSDAAREPRPAPAPIRRRSSNYRAYATEPHAKKKSKISA. An N-acetylalanine modification is found at Ala2. Phosphoserine is present on residues Ser5 and Ser6. Phosphoserine; by PKA and PKD/PRKD1 is present on residues Ser23 and Ser24. At Tyr26 the chain carries Phosphotyrosine. Thr31 is modified (phosphothreonine; by STK4/MST1). An involved in binding TNC region spans residues 32–79; that stretch reads EPHAKKKSKISASRKLQLKTLLLQIAKQELEREAEERRGEKGRALSTR. Phosphoserine; by PKC/PRKCE is present on residues Ser42 and Ser44. Thr51 carries the phosphothreonine; by STK4/MST1 modification. Ser77 bears the Phosphoserine mark. The residue at position 78 (Thr78) is a Phosphothreonine. Residues Thr129 and Thr143 each carry the phosphothreonine; by STK4/MST1 modification. The interval 129-149 is involved in binding TNC and actin; sequence TQKIFDLRGKFKRPTLRRVRI. Phosphoserine; by PAK3 is present on Ser150. Ser166 is subject to Phosphoserine. Thr181 carries the phosphothreonine modification. The residue at position 199 (Ser199) is a Phosphoserine.

This sequence belongs to the troponin I family. Binds to actin and tropomyosin. Interacts with TRIM63. Interacts with STK4/MST1. Post-translationally, phosphorylated at Ser-42 and Ser-44 by PRKCE; phosphorylation increases myocardium contractile dysfunction. Phosphorylated at Ser-23 and Ser-24 by PRKD1; phosphorylation reduces myofilament calcium sensitivity. Phosphorylated preferentially at Thr-31. Phosphorylation by STK4/MST1 alters its binding affinity to TNNC1 (cardiac Tn-C) and TNNT2 (cardiac Tn-T).

Functionally, troponin I is the inhibitory subunit of troponin, the thin filament regulatory complex which confers calcium-sensitivity to striated muscle actomyosin ATPase activity. In Homo sapiens (Human), this protein is Troponin I, cardiac muscle (TNNI3).